The following is an 88-amino-acid chain: UPF0297 protein SSA_2241 (88 aa).

Belongs to the UPF0297 family.

This Streptococcus sanguinis (strain SK36) protein is UPF0297 protein SSA_2241.